Reading from the N-terminus, the 1161-residue chain is DNA-directed RNA polymerase subunit beta (1161 aa).

It belongs to the RNA polymerase beta chain family. In terms of assembly, the RNAP catalytic core consists of 2 alpha, 1 beta, 1 beta' and 1 omega subunit. When a sigma factor is associated with the core the holoenzyme is formed, which can initiate transcription. The RNAP complex including the principal sigma factor HrdB also interacts with RNA-binding protein RbpA.

It carries out the reaction RNA(n) + a ribonucleoside 5'-triphosphate = RNA(n+1) + diphosphate. DNA-dependent RNA polymerase catalyzes the transcription of DNA into RNA using the four ribonucleoside triphosphates as substrates. The sequence is that of DNA-directed RNA polymerase subunit beta from Streptomyces coelicolor (strain ATCC BAA-471 / A3(2) / M145).